Here is a 232-residue protein sequence, read N- to C-terminus: C4-dicarboxylate TRAP transporter small permease protein DctQ (232 aa).

4 consecutive transmembrane segments (helical) span residues 30 to 50 (EFLI…NVIM), 58 to 78 (ILWA…VGAS), 103 to 123 (LYAL…LIGS), and 167 to 187 (FIPY…FLQI).

This sequence belongs to the TRAP transporter small permease family. As to quaternary structure, the complex comprises the extracytoplasmic solute receptor protein DctP, and the two transmembrane proteins DctQ and DctM.

The protein localises to the cell inner membrane. In terms of biological role, part of the tripartite ATP-independent periplasmic (TRAP) transport system DctPQM involved in C4-dicarboxylates uptake. The chain is C4-dicarboxylate TRAP transporter small permease protein DctQ from Vibrio cholerae serotype O1 (strain ATCC 39315 / El Tor Inaba N16961).